The following is a 183-amino-acid chain: Large ribosomal subunit protein uL6 (183 aa).

Belongs to the universal ribosomal protein uL6 family. Part of the 50S ribosomal subunit.

Functionally, this protein binds to the 23S rRNA, and is important in its secondary structure. It is located near the subunit interface in the base of the L7/L12 stalk, and near the tRNA binding site of the peptidyltransferase center. The protein is Large ribosomal subunit protein uL6 of Chlamydia trachomatis serovar D (strain ATCC VR-885 / DSM 19411 / UW-3/Cx).